The sequence spans 171 residues: NADH-quinone oxidoreductase subunit I 1 (171 aa).

2 4Fe-4S ferredoxin-type domains span residues 39-71 and 81-110; these read IVLTRDPDGQERCVACNLCAVVCPVGCIDLTKA and EHFRINFARCIFCGFCEEACPTSAIQLTPD. Residues Cys-51, Cys-54, Cys-57, Cys-61, Cys-90, Cys-93, Cys-96, and Cys-100 each coordinate [4Fe-4S] cluster.

Belongs to the complex I 23 kDa subunit family. As to quaternary structure, NDH-1 is composed of 14 different subunits. Subunits NuoA, H, J, K, L, M, N constitute the membrane sector of the complex. Requires [4Fe-4S] cluster as cofactor.

It is found in the cell inner membrane. The catalysed reaction is a quinone + NADH + 5 H(+)(in) = a quinol + NAD(+) + 4 H(+)(out). NDH-1 shuttles electrons from NADH, via FMN and iron-sulfur (Fe-S) centers, to quinones in the respiratory chain. The immediate electron acceptor for the enzyme in this species is believed to be ubiquinone. Couples the redox reaction to proton translocation (for every two electrons transferred, four hydrogen ions are translocated across the cytoplasmic membrane), and thus conserves the redox energy in a proton gradient. This Rhodopseudomonas palustris (strain BisB5) protein is NADH-quinone oxidoreductase subunit I 1.